We begin with the raw amino-acid sequence, 156 residues long: ATP synthase subunit b (156 aa).

Residues 11–31 (LIAFVVFVIFCMKYVWPPIIG) traverse the membrane as a helical segment.

This sequence belongs to the ATPase B chain family. F-type ATPases have 2 components, F(1) - the catalytic core - and F(0) - the membrane proton channel. F(1) has five subunits: alpha(3), beta(3), gamma(1), delta(1), epsilon(1). F(0) has three main subunits: a(1), b(2) and c(10-14). The alpha and beta chains form an alternating ring which encloses part of the gamma chain. F(1) is attached to F(0) by a central stalk formed by the gamma and epsilon chains, while a peripheral stalk is formed by the delta and b chains.

It is found in the cell inner membrane. F(1)F(0) ATP synthase produces ATP from ADP in the presence of a proton or sodium gradient. F-type ATPases consist of two structural domains, F(1) containing the extramembraneous catalytic core and F(0) containing the membrane proton channel, linked together by a central stalk and a peripheral stalk. During catalysis, ATP synthesis in the catalytic domain of F(1) is coupled via a rotary mechanism of the central stalk subunits to proton translocation. In terms of biological role, component of the F(0) channel, it forms part of the peripheral stalk, linking F(1) to F(0). In Colwellia psychrerythraea (strain 34H / ATCC BAA-681) (Vibrio psychroerythus), this protein is ATP synthase subunit b.